A 903-amino-acid chain; its full sequence is DNA gyrase subunit A (903 aa).

One can recognise a Topo IIA-type catalytic domain in the interval 36-499 (LPDARDGFKP…AIDDSDDEDL (464 aa)). Y124 acts as the O-(5'-phospho-DNA)-tyrosine intermediate in catalysis. The GyrA-box signature appears at 526 to 532 (QNRGGKG). Basic and acidic residues predominate over residues 881–895 (VDDDSVVKDDAEKQE). Residues 881–903 (VDDDSVVKDDAEKQEIGPTETEE) form a disordered region.

Belongs to the type II topoisomerase GyrA/ParC subunit family. Heterotetramer, composed of two GyrA and two GyrB chains. In the heterotetramer, GyrA contains the active site tyrosine that forms a transient covalent intermediate with DNA, while GyrB binds cofactors and catalyzes ATP hydrolysis.

It is found in the cytoplasm. It catalyses the reaction ATP-dependent breakage, passage and rejoining of double-stranded DNA.. Its function is as follows. A type II topoisomerase that negatively supercoils closed circular double-stranded (ds) DNA in an ATP-dependent manner to modulate DNA topology and maintain chromosomes in an underwound state. Negative supercoiling favors strand separation, and DNA replication, transcription, recombination and repair, all of which involve strand separation. Also able to catalyze the interconversion of other topological isomers of dsDNA rings, including catenanes and knotted rings. Type II topoisomerases break and join 2 DNA strands simultaneously in an ATP-dependent manner. This is DNA gyrase subunit A from Fibrobacter succinogenes (strain ATCC 19169 / S85).